The following is a 261-amino-acid chain: Triosephosphate isomerase (261 aa).

Position 10–12 (10–12 (NWK)) interacts with substrate. His100 acts as the Electrophile in catalysis. Residue Glu172 is the Proton acceptor of the active site. Substrate is bound by residues Gly178, Ser218, and 239–240 (GG).

The protein belongs to the triosephosphate isomerase family. As to quaternary structure, homodimer.

Its subcellular location is the cytoplasm. The enzyme catalyses D-glyceraldehyde 3-phosphate = dihydroxyacetone phosphate. The protein operates within carbohydrate biosynthesis; gluconeogenesis. It functions in the pathway carbohydrate degradation; glycolysis; D-glyceraldehyde 3-phosphate from glycerone phosphate: step 1/1. In terms of biological role, involved in the gluconeogenesis. Catalyzes stereospecifically the conversion of dihydroxyacetone phosphate (DHAP) to D-glyceraldehyde-3-phosphate (G3P). This is Triosephosphate isomerase from Mycobacterium tuberculosis (strain CDC 1551 / Oshkosh).